An 84-amino-acid polypeptide reads, in one-letter code: U4-theraphotoxin-Hhn1b (84 aa).

Positions 1 to 22 (MKVTLIAILTCAAVLVLHTTAA) are cleaved as a signal peptide. The propeptide occupies 23–47 (EELEESQLMEVGMPDTELAAVDEER). Cystine bridges form between Cys-51–Cys-65, Cys-55–Cys-76, and Cys-70–Cys-81.

Belongs to the neurotoxin 12 (Hwtx-2) family. 02 (Hwtx-2) subfamily. In terms of tissue distribution, expressed by the venom gland.

The protein resides in the secreted. Functionally, postsynaptic neurotoxin. This Cyriopagopus hainanus (Chinese bird spider) protein is U4-theraphotoxin-Hhn1b.